Reading from the N-terminus, the 455-residue chain is MSLTVVSMACVGFFLLQGAWPLMGGQDKPFLSARPSTVVPRGGHVALQCHYRRGFNNFMLYKEDRSHVPIFHGRIFQESFIMGPVTPAHAGTYRCRGSRPHSLTGWSAPSNPLVIMVTGNHRKPSLLAHPGPLLKSGETVILQCWSDVMFEHFFLHREGISEDPSRLVGQIHDGVSKANFSIGPLMPVLAGTYRCYGSVPHSPYQLSAPSDPLDIVITGLYEKPSLSAQPGPTVQAGENVTLSCSSWSSYDIYHLSREGEAHERRLRAVPKVNRTFQADFPLGPATHGGTYRCFGSFRALPCVWSNSSDPLLVSVTGNPSSSWPSPTEPSSKSGICRHLHVLIGTSVVIFLFILLLFFLLYRWCSNKKNAAVMDQEPAGDRTVNRQDSDEQDPQEVTYAQLDHCVFIQRKISRPSQRPKTPLTDTSVYTELPNAEPRSKVVSCPRAPQSGLEGVF.

A signal peptide spans 1–21 (MSLTVVSMACVGFFLLQGAWP). Residues 22–340 (LMGGQDKPFL…SKSGICRHLH (319 aa)) are Extracellular-facing. 3 Ig-like C2-type domains span residues 42-102 (GGHV…RPHS), 137-202 (GETV…VPHS), and 237-300 (GENV…FRAL). Cystine bridges form between Cys-49-Cys-95 and Cys-144-Cys-195. N-linked (GlcNAc...) asparagine glycosylation is found at Asn-179, Asn-239, Asn-273, and Asn-306. A disulfide bridge links Cys-244 with Cys-293. A helical membrane pass occupies residues 341–360 (VLIGTSVVIFLFILLLFFLL). Residues 361–455 (YRWCSNKKNA…APQSGLEGVF (95 aa)) lie on the Cytoplasmic side of the membrane.

Belongs to the immunoglobulin superfamily. As to quaternary structure, interacts with peptide-free HLA-F open conformer. As to expression, expressed in astrocytes.

It localises to the cell membrane. Receptor on natural killer (NK) cells and T cells for MHC class I molecules. Upon binding of peptide-free HLA-F open conformer, negatively regulates NK and T cell effector functions. Acts as a receptor on astrocytes for HLA-F. Through interaction with HLA-F, may protect motor neurons from astrocyte-induced toxicity. This is Killer cell immunoglobulin-like receptor 3DL2 from Homo sapiens (Human).